A 346-amino-acid polypeptide reads, in one-letter code: tRNA N6-adenosine threonylcarbamoyltransferase (346 aa).

The Fe cation site is built by His-110 and His-114. Residues 132-136, Asp-165, Gly-178, and Asn-274 contribute to the substrate site; that span reads LLSGG. Fe cation is bound at residue Asp-298.

This sequence belongs to the KAE1 / TsaD family. It depends on Fe(2+) as a cofactor.

The protein resides in the cytoplasm. The catalysed reaction is L-threonylcarbamoyladenylate + adenosine(37) in tRNA = N(6)-L-threonylcarbamoyladenosine(37) in tRNA + AMP + H(+). Required for the formation of a threonylcarbamoyl group on adenosine at position 37 (t(6)A37) in tRNAs that read codons beginning with adenine. Is involved in the transfer of the threonylcarbamoyl moiety of threonylcarbamoyl-AMP (TC-AMP) to the N6 group of A37, together with TsaE and TsaB. TsaD likely plays a direct catalytic role in this reaction. The sequence is that of tRNA N6-adenosine threonylcarbamoyltransferase from Borreliella burgdorferi (strain ATCC 35210 / DSM 4680 / CIP 102532 / B31) (Borrelia burgdorferi).